A 117-amino-acid polypeptide reads, in one-letter code: Large ribosomal subunit protein bL20 (117 aa).

The protein belongs to the bacterial ribosomal protein bL20 family.

Functionally, binds directly to 23S ribosomal RNA and is necessary for the in vitro assembly process of the 50S ribosomal subunit. It is not involved in the protein synthesizing functions of that subunit. The protein is Large ribosomal subunit protein bL20 of Neorickettsia sennetsu (strain ATCC VR-367 / Miyayama) (Ehrlichia sennetsu).